Reading from the N-terminus, the 338-residue chain is Isopenicillin N synthase (338 aa).

4 residues coordinate isopenicillin N: Arg-89, Tyr-93, Ser-185, and Tyr-191. Arg-89, Tyr-93, Ser-185, Tyr-191, His-216, and Asp-218 together coordinate N-[(5S)-5-amino-5-carboxypentanoyl]-L-cysteinyl-D-valine. Residues 182–290 (TLSSVVLIRY…RQSLPFFVNL (109 aa)) enclose the Fe2OG dioxygenase domain. Fe(2+)-binding residues include His-216, Asp-218, and His-272. Arg-281 contributes to the 2-oxoglutarate binding site. Ser-283 serves as a coordination point for isopenicillin N. Residue Ser-283 coordinates N-[(5S)-5-amino-5-carboxypentanoyl]-L-cysteinyl-D-valine.

Belongs to the iron/ascorbate-dependent oxidoreductase family. In terms of assembly, monomer. Fe(2+) serves as cofactor.

It is found in the cytoplasm. Its subcellular location is the cytosol. The enzyme catalyses N-[(5S)-5-amino-5-carboxypentanoyl]-L-cysteinyl-D-valine + O2 = isopenicillin N + 2 H2O. Its pathway is antibiotic biosynthesis; penicillin G biosynthesis; penicillin G from L-alpha-aminoadipate and L-cysteine and L-valine: step 2/3. In terms of biological role, isopenicillin N synthase; part of the gene cluster that mediates the biosynthesis of penicillin, the world's most important antibiotic. IpnA catalyzes the cyclization of the tripeptide N-[(5S)-5-amino-5-carboxypentanoyl]-L-cysteinyl-D-valine (LLD-ACV or ACV) to form isopenicillin N (IPN) that contains the beta-lactam nucleus. The penicillin biosynthesis occurs via 3 enzymatic steps, the first corresponding to the production of the tripeptide N-[(5S)-5-amino-5-carboxypentanoyl]-L-cysteinyl-D-valine (LLD-ACV or ACV) by the NRPS pcbAB. The tripeptide ACV is then cyclized to isopenicillin N (IPN) by the isopenicillin N synthase pcbC that forms the beta-lactam nucleus. Finally, the alpha-aminoadipyl side chain is exchanged for phenylacetic acid by the isopenicillin N acyltransferase penDE to yield penicillin in the peroxisomal matrix. The polypeptide is Isopenicillin N synthase (PCBC) (Hapsidospora chrysogena (Acremonium chrysogenum)).